The primary structure comprises 333 residues: Flotillin-like protein FloA (333 aa).

A helical membrane pass occupies residues 9–29 (IVLIVGGIIFLILFFHYVPFF).

This sequence belongs to the flotillin-like FloA family. In terms of assembly, homooligomerizes.

It is found in the cell membrane. The protein localises to the membrane raft. Its function is as follows. Found in functional membrane microdomains (FMM) that may be equivalent to eukaryotic membrane rafts. FMMs are highly dynamic and increase in number as cells age. Flotillins are thought to be important factors in membrane fluidity. This chain is Flotillin-like protein FloA, found in Bacteroides thetaiotaomicron (strain ATCC 29148 / DSM 2079 / JCM 5827 / CCUG 10774 / NCTC 10582 / VPI-5482 / E50).